Reading from the N-terminus, the 76-residue chain is Omega-agatoxin-Aa3a (76 aa).

6 disulfide bridges follow: Cys2–Cys19, Cys9–Cys25, Cys16–Cys52, Cys18–Cys40, Cys27–Cys38, and Cys59–Cys67.

The protein belongs to the neurotoxin 04 (omega-agtx) family. 03 (type II/III omega-agtx) subfamily. As to expression, expressed by the venom gland.

Its subcellular location is the secreted. Omega-agatoxin are antagonist of voltage-gated calcium channels. They block insect neuromuscular transmission presynaptically. Potent blocker of N- (Cav2.2/CACNA1B) and L-type (Cav1/CACNA1) calcium channels. This is Omega-agatoxin-Aa3a from Agelenopsis aperta (North American funnel-web spider).